A 331-amino-acid polypeptide reads, in one-letter code: Phenylalanine--tRNA ligase alpha subunit (331 aa).

Mg(2+) is bound at residue Glu-252.

It belongs to the class-II aminoacyl-tRNA synthetase family. Phe-tRNA synthetase alpha subunit type 1 subfamily. As to quaternary structure, tetramer of two alpha and two beta subunits. Requires Mg(2+) as cofactor.

The protein localises to the cytoplasm. The catalysed reaction is tRNA(Phe) + L-phenylalanine + ATP = L-phenylalanyl-tRNA(Phe) + AMP + diphosphate + H(+). The chain is Phenylalanine--tRNA ligase alpha subunit from Xanthomonas euvesicatoria pv. vesicatoria (strain 85-10) (Xanthomonas campestris pv. vesicatoria).